The following is a 621-amino-acid chain: Chaperone protein HtpG (621 aa).

The a; substrate-binding stretch occupies residues 1-328; the sequence is MIQEKKKFDA…SEDLPLNISR (328 aa). The segment at 329–544 is b; that stretch reads ESLQHNSVLE…DAAMDIRMER (216 aa). The tract at residues 475–494 is disordered; it reads SDIDVEQTTSQSEAKNTDSK. The c stretch occupies residues 545–621; the sequence is FLIEQKQIAN…LNDIVQKAIL (77 aa).

Belongs to the heat shock protein 90 family. Homodimer.

It localises to the cytoplasm. Molecular chaperone. Has ATPase activity. The chain is Chaperone protein HtpG from Rickettsia rickettsii (strain Iowa).